The following is a 170-amino-acid chain: Small ribosomal subunit protein uS3mA (170 aa).

The transit peptide at 1 to 30 (MAAPVMSALGRLQGLIRTERSLLTHVQSRC) directs the protein to the mitochondrion.

It belongs to the universal ribosomal protein uS3 family. As to quaternary structure, component of the mitochondrial ribosome small subunit (28S) which comprises a 12S rRNA and about 30 distinct proteins.

It localises to the mitochondrion. This chain is Small ribosomal subunit protein uS3mA (mrps24-a), found in Xenopus laevis (African clawed frog).